A 177-amino-acid chain; its full sequence is Large ribosomal subunit protein uL6 (177 aa).

Belongs to the universal ribosomal protein uL6 family. As to quaternary structure, part of the 50S ribosomal subunit.

In terms of biological role, this protein binds to the 23S rRNA, and is important in its secondary structure. It is located near the subunit interface in the base of the L7/L12 stalk, and near the tRNA binding site of the peptidyltransferase center. In Rhizobium leguminosarum bv. trifolii (strain WSM2304), this protein is Large ribosomal subunit protein uL6.